The sequence spans 94 residues: Acylphosphatase (94 aa).

The 90-residue stretch at 5-94 (RLTAFVHGHV…PRDVEGFVER (90 aa)) folds into the Acylphosphatase-like domain. Residues Arg20 and Asn38 contribute to the active site.

Belongs to the acylphosphatase family.

It carries out the reaction an acyl phosphate + H2O = a carboxylate + phosphate + H(+). This Corynebacterium glutamicum (strain ATCC 13032 / DSM 20300 / JCM 1318 / BCRC 11384 / CCUG 27702 / LMG 3730 / NBRC 12168 / NCIMB 10025 / NRRL B-2784 / 534) protein is Acylphosphatase (acyP).